The following is a 527-amino-acid chain: GMP synthase [glutamine-hydrolyzing] (527 aa).

Positions 19-212 constitute a Glutamine amidotransferase type-1 domain; the sequence is KIIVLDYGSQ…AFSICGAKGD (194 aa). Cys96 serves as the catalytic Nucleophile. Catalysis depends on residues His186 and Glu188. Residues 213–402 enclose the GMPS ATP-PPase domain; the sequence is WSMANFVDMQ…LGMPDEVVWR (190 aa). 240–246 serves as a coordination point for ATP; that stretch reads SGGVDSS.

As to quaternary structure, homodimer.

The catalysed reaction is XMP + L-glutamine + ATP + H2O = GMP + L-glutamate + AMP + diphosphate + 2 H(+). Its pathway is purine metabolism; GMP biosynthesis; GMP from XMP (L-Gln route): step 1/1. In terms of biological role, catalyzes the synthesis of GMP from XMP. The protein is GMP synthase [glutamine-hydrolyzing] of Streptococcus thermophilus (strain CNRZ 1066).